The primary structure comprises 978 residues: Regulator of MON1-CCZ1 complex homolog (978 aa).

Low complexity-rich tracts occupy residues 311-351 (TSTP…MISS) and 479-495 (NNNNNNNNNNNNNNNNN). 4 disordered regions span residues 311 to 363 (TSTP…HKEQ), 474 to 546 (SINQ…NSKT), 558 to 665 (KQQQ…NNHV), and 703 to 727 (EKEKENDNNNNNTNNNTNNNNNNNI). Polar residues predominate over residues 496–515 (TAQTLNSTGNLSNSISIGGM). Positions 516-539 (NTSTDNLTTTTTTSSSISSSPSNS) are enriched in low complexity. Over residues 582-591 (GDGGSGGSGG) the composition is skewed to gly residues. Composition is skewed to low complexity over residues 592 to 663 (SFYN…NNNN) and 710 to 727 (NNNNNTNNNTNNNNNNNI). The Mic1 domain occupies 735-908 (KLELDSKYLI…HPSFDKYIKL (174 aa)). Positions 955–978 (NNSSPTLRSSNSLNSSPRLQYSNN) are disordered.

Belongs to the RMC1 family.

It is found in the lysosome membrane. It localises to the late endosome membrane. Its function is as follows. May have a role in autophagy. The chain is Regulator of MON1-CCZ1 complex homolog from Dictyostelium discoideum (Social amoeba).